Reading from the N-terminus, the 652-residue chain is DNA polymerase epsilon subunit B (652 aa).

Belongs to the DNA polymerase epsilon subunit B family. Heterotetramer. Consists of four subunits: POL2, DPB2, DPB3 and DPB4.

Its subcellular location is the nucleus. As accessory component of the DNA polymerase epsilon (DNA polymerase II) participates in chromosomal DNA replication. This chain is DNA polymerase epsilon subunit B (DPB2), found in Yarrowia lipolytica (strain CLIB 122 / E 150) (Yeast).